A 62-amino-acid chain; its full sequence is MKTVKELSVKEMQLTTGGKYYGNGVSCNKNGCTVDWSKAIGIIGNNAAANLTTGGAAGWNKG.

The propeptide occupies 1-18 (MKTVKELSVKEMQLTTGG). A disulfide bridge links cysteine 27 with cysteine 32.

The protein resides in the secreted. Its function is as follows. Inhibits the growth of several Gram-positive bacteria, especially the food-borne pathogen L.monocytogenes, but has no effect on the growth of a number of yeasts and Gram-negative bacteria. The protein is Bacteriocin piscicolin-126 (pisA) of Carnobacterium maltaromaticum (Carnobacterium piscicola).